The sequence spans 308 residues: Isoaspartyl peptidase/L-asparaginase (308 aa).

Methionine 1 bears the N-acetylmethionine mark. Threonine 168 (nucleophile) is an active-site residue. Substrate is bound by residues 196–199 and 219–222; these read RVGD and TGHG.

Belongs to the Ntn-hydrolase family. In terms of assembly, heterodimer of an alpha and beta chain produced by autocleavage. This heterodimer may then dimerize in turn, giving rise to a heterotetramer. Post-translationally, cleaved into an alpha and beta chain by autocatalysis; this activates the enzyme. The N-terminal residue of the beta subunit is responsible for the nucleophile hydrolase activity. In terms of tissue distribution, expressed in brain, kidney, testis and tissues of the gastrointestinal tract. Present in sperm (at protein level). Over-expressed in uterine, mammary, prostatic and ovarian carcinoma.

It is found in the cytoplasm. It carries out the reaction L-asparagine + H2O = L-aspartate + NH4(+). The enzyme catalyses Cleavage of a beta-linked Asp residue from the N-terminus of a polypeptide.. With respect to regulation, glycine accelerates autocleavage into an alpha and beta chain. In terms of biological role, has both L-asparaginase and beta-aspartyl peptidase activity. May be involved in the production of L-aspartate, which can act as an excitatory neurotransmitter in some brain regions. Is highly active with L-Asp beta-methyl ester. Besides, has catalytic activity toward beta-aspartyl dipeptides and their methyl esters, including beta-L-Asp-L-Phe, beta-L-Asp-L-Phe methyl ester (aspartame), beta-L-Asp-L-Ala, beta-L-Asp-L-Leu and beta-L-Asp-L-Lys. Does not have aspartylglucosaminidase activity and is inactive toward GlcNAc-L-Asn. Likewise, has no activity toward glutamine. The chain is Isoaspartyl peptidase/L-asparaginase (ASRGL1) from Homo sapiens (Human).